We begin with the raw amino-acid sequence, 255 residues long: Electron transfer flavoprotein subunit beta (255 aa).

The residue at position 2 (A2) is an N-acetylalanine. AMP-binding positions include A9, 39–42, C66, and 123–134; these read NPFC and GKQAIDDDCNQT. The recognition loop stretch occupies residues 183–205; the sequence is ADLRLNEPRYATLPNIMKAKKKK. Position 200 is an N6,N6,N6-trimethyllysine; by ETFBKMT; alternate (K200). An N6-acetyllysine; alternate modification is found at K200. K200 bears the N6-methyllysine; alternate mark. At K203 the chain carries N6,N6,N6-trimethyllysine; by ETFBKMT. K210 is modified (N6-acetyllysine; alternate). Residue K210 is modified to N6-succinyllysine; alternate. Phosphoserine occurs at positions 223 and 226. N6-acetyllysine is present on K238. K248 bears the N6-acetyllysine; alternate mark. The residue at position 248 (K248) is an N6-succinyllysine; alternate.

Belongs to the ETF beta-subunit/FixA family. Heterodimer composed of ETFA and ETFB. Identified in a complex that contains ETFA, ETFB and ETFRF1. Interacts with ACADM. In terms of processing, methylated. Trimethylation at Lys-200 and Lys-203 may negatively regulate the activity in electron transfer from acyl-CoA dehydrogenases.

The protein resides in the mitochondrion matrix. Heterodimeric electron transfer flavoprotein that accepts electrons from several mitochondrial dehydrogenases, including acyl-CoA dehydrogenases, glutaryl-CoA and sarcosine dehydrogenase. It transfers the electrons to the main mitochondrial respiratory chain via ETF-ubiquinone oxidoreductase. Required for normal mitochondrial fatty acid oxidation and normal amino acid metabolism. ETFB binds an AMP molecule that probably has a purely structural role. The protein is Electron transfer flavoprotein subunit beta of Pongo abelii (Sumatran orangutan).